Here is a 215-residue protein sequence, read N- to C-terminus: S-crystallin 2 (215 aa).

The 79-residue stretch at 2–80 (PSYTLHYFNH…YLAREFGFHG (79 aa)) folds into the GST N-terminal domain. Residues 82 to 215 (NNLDMARVDF…YLKSRSSTDF (134 aa)) enclose the GST C-terminal domain.

It belongs to the GST superfamily. In terms of tissue distribution, lens.

Functionally, S-crystallins are structural components of squids and octopi eye lens. Contains relatively little GST activity (1/1000 of that of mammalian GST enzyme). This chain is S-crystallin 2 (OCTS2), found in Octopus vulgaris (Common octopus).